The following is a 601-amino-acid chain: Glutathione-regulated potassium-efflux system protein KefB (601 aa).

Helical transmembrane passes span 4–24 (ADLLTAGVLFLFAAVAAVPLA), 29–49 (IGAVLGYLLAGIAIGPWGLGF), 55–75 (EILHFSELGVVFLMFIIGLEL), 87–107 (IFGVGAAQVLLSAAVLAGLLM), 111–131 (FLWQAAVVGGIGLAMSSTAMA), 152–172 (VLLFQDLAVIPALALVPLLAG), 177–197 (HFDWFKVAMKVLAFAVMLIGG), 207–227 (FIAASGVREVFTAATLLLVLS), 230–250 (LFMDALGLSMALGTFIAGVLL), 262–282 (AIDPFKGLLLGLFFISVGMSL), 284–304 (LGVLYTHLLWVAASVVILVVI), 324–344 (MQFASVLSQGGEFAFVLFSTA), and 356–376 (ALLLVTVTLSMMTTPLLMKGI). The RCK N-terminal domain occupies 400–519 (KPQVIVVGFG…AGVTQFSRET (120 aa)).

Belongs to the monovalent cation:proton antiporter 2 (CPA2) transporter (TC 2.A.37) family. KefB subfamily. As to quaternary structure, interacts with the regulatory subunit KefG.

The protein resides in the cell inner membrane. Its function is as follows. Pore-forming subunit of a potassium efflux system that confers protection against electrophiles. Catalyzes K(+)/H(+) antiport. In Salmonella dublin (strain CT_02021853), this protein is Glutathione-regulated potassium-efflux system protein KefB.